A 191-amino-acid chain; its full sequence is Molybdenum cofactor guanylyltransferase (191 aa).

GTP-binding positions include Leu-13–Gly-15, Lys-26, Asp-72, and Asp-102. Mg(2+) is bound at residue Asp-102.

It belongs to the MobA family. Monomer. Mg(2+) is required as a cofactor.

Its subcellular location is the cytoplasm. The catalysed reaction is Mo-molybdopterin + GTP + H(+) = Mo-molybdopterin guanine dinucleotide + diphosphate. In terms of biological role, transfers a GMP moiety from GTP to Mo-molybdopterin (Mo-MPT) cofactor (Moco or molybdenum cofactor) to form Mo-molybdopterin guanine dinucleotide (Mo-MGD) cofactor. The chain is Molybdenum cofactor guanylyltransferase from Pseudomonas entomophila (strain L48).